The primary structure comprises 85 residues: Large ribosomal subunit protein bL27 (85 aa).

The segment at 1–22 (MAHKKAGGSTRNGRDSESKRLG) is disordered.

It belongs to the bacterial ribosomal protein bL27 family.

This chain is Large ribosomal subunit protein bL27, found in Teredinibacter turnerae (strain ATCC 39867 / T7901).